The following is a 145-amino-acid chain: Small ribosomal subunit protein uS12 (145 aa).

The protein belongs to the universal ribosomal protein uS12 family. In terms of assembly, component of the small ribosomal subunit. Mature ribosomes consist of a small (40S) and a large (60S) subunit. The 40S subunit contains about 32 different proteins and 1 molecule of RNA (18S). The 60S subunit contains 45 different proteins and 3 molecules of RNA (25S, 5.8S and 5S).

It localises to the cytoplasm. In terms of biological role, component of the ribosome, a large ribonucleoprotein complex responsible for the synthesis of proteins in the cell. The small ribosomal subunit (SSU) binds messenger RNAs (mRNAs) and translates the encoded message by selecting cognate aminoacyl-transfer RNA (tRNA) molecules. The large subunit (LSU) contains the ribosomal catalytic site termed the peptidyl transferase center (PTC), which catalyzes the formation of peptide bonds, thereby polymerizing the amino acids delivered by tRNAs into a polypeptide chain. The nascent polypeptides leave the ribosome through a tunnel in the LSU and interact with protein factors that function in enzymatic processing, targeting, and the membrane insertion of nascent chains at the exit of the ribosomal tunnel. The protein is Small ribosomal subunit protein uS12 (RPS23A) of Candida albicans (strain SC5314 / ATCC MYA-2876) (Yeast).